The chain runs to 423 residues: MAKLTESMTNVLEGDSMDQDVESPVAIHQPKLPKQARDDLPRHISRDRTKRKIQRYVRKDGKCNVHHGNVRETYRYLTDIFTTLVDLKWRFNLLIFVMVYTVTWLFFGMIWWLIAYIRGDMDHIEDPSWTPCVTNLNGFVSAFLFSIETETTIGYGYRVITDKCPEGIILLLIQSVLGSIVNAFMVGCMFVKISQPKKRAETLVFSTHAVISMRDGKLCLMFRVGDLRNSHIVEASIRAKLIKSKQTSEGEFIPLNQTDINVGYYTGDDRLSLVSPLIISHEINQQSPFWEISKAQLPKEELEIVVILEGMVEATGMTCQARSSYITSEILWGYRFTPVLTLEDGFYEVDYNSFHETYETSTPSLSAKELAELASRAELPLSWSVSSKLNQHAELETEEEEKNLEEQTERNGDVANLENESKV.

Over 1–89 (MAKLTESMTN…IFTTLVDLKW (89 aa)) the chain is Cytoplasmic. Phosphoserine is present on residues Ser-16 and Ser-23. A helical transmembrane segment spans residues 90–114 (RFNLLIFVMVYTVTWLFFGMIWWLI). The Extracellular portion of the chain corresponds to 115 to 138 (AYIRGDMDHIEDPSWTPCVTNLNG). The segment at residues 139-150 (FVSAFLFSIETE) is an intramembrane region (helical; Pore-forming). Residues 151–157 (TTIGYGY) constitute an intramembrane region (pore-forming). The Selectivity filter signature appears at 152–157 (TIGYGY). Residues 158-166 (RVITDKCPE) lie on the Extracellular side of the membrane. The helical transmembrane segment at 167–188 (GIILLLIQSVLGSIVNAFMVGC) threads the bilayer. At 189–423 (MFVKISQPKK…VANLENESKV (235 aa)) the chain is on the cytoplasmic side. A disordered region spans residues 390–423 (NQHAELETEEEEKNLEEQTERNGDVANLENESKV). A PDZ-binding motif is present at residues 420-423 (ESKV).

It belongs to the inward rectifier-type potassium channel (TC 1.A.2.1) family. KCNJ6 subfamily. As to quaternary structure, associates with KCNJ3/GIRK1 or KCNJ5/GRIK4 to form a G-protein-activated heteromultimer pore-forming unit. The resulting inward current is much larger. Interacts (via PDZ-binding motif) with SNX27 (via PDZ domain); the interaction is required when endocytosed to prevent degradation in lysosomes and promote recycling to the plasma membrane.

It is found in the membrane. It catalyses the reaction K(+)(in) = K(+)(out). Activated by phosphatidylinositol 4,5 biphosphate (PtdIns(4,5)P2). Its function is as follows. Inward rectifier potassium channels are characterized by a greater tendency to allow potassium to flow into the cell rather than out of it. Their voltage dependence is regulated by the concentration of extracellular potassium; as external potassium is raised, the voltage range of the channel opening shifts to more positive voltages. The inward rectification is mainly due to the blockage of outward current by internal magnesium. This potassium channel may be involved in the regulation of insulin secretion by glucose and/or neurotransmitters acting through G-protein-coupled receptors. In Pongo abelii (Sumatran orangutan), this protein is G protein-activated inward rectifier potassium channel 2 (KCNJ6).